The primary structure comprises 534 residues: Arginine transporter 1 (534 aa).

6 consecutive transmembrane segments (helical) span residues 35 to 55 (YVLL…YFGW), 99 to 119 (SLFT…GYLL), 126 to 146 (AVAL…AFSG), 154 to 174 (PAFV…LLIV), 182 to 202 (ALIM…PLVL), and 216 to 236 (VCIG…FFFI). N-linked (GlcNAc...) asparagine glycosylation occurs at asparagine 246. Residues 261–302 (TAQSSPKAVDSPPCDEGASSRGRLAVSHNTERTAPDDEQEKD) are disordered. Positions 289–302 (NTERTAPDDEQEKD) are enriched in basic and acidic residues. A run of 6 helical transmembrane segments spans residues 329–349 (AFTF…WVMA), 365–385 (YTLE…GVVI), 388–408 (IGIM…YVCV), 419–439 (FSVI…YVFV), 451–471 (LIGV…VLYG), and 483–503 (RPVV…LLAM).

It belongs to the SLC43A transporter (TC 2.A.1.44) family.

Its subcellular location is the cell membrane. It catalyses the reaction L-arginine(in) = L-arginine(out). In terms of biological role, selective L-arginine transporter that is essential for parasite survival and virulence. Does not require other inorganic ions such as sodium, chloride, potassium or calcium. The protein is Arginine transporter 1 of Toxoplasma gondii (strain ATCC 50611 / Me49).